The chain runs to 186 residues: Inner membrane-spanning protein YciB (186 aa).

6 helical membrane passes run 3–23 (FLFD…AGIY), 24–44 (VATT…WFKH), 49–69 (AMQW…LIFH), 76–96 (WKPT…AVLL), 121–141 (LVWS…AYHF), and 149–169 (FKLF…SVWL).

The protein belongs to the YciB family.

The protein localises to the cell inner membrane. Its function is as follows. Plays a role in cell envelope biogenesis, maintenance of cell envelope integrity and membrane homeostasis. In Ralstonia nicotianae (strain ATCC BAA-1114 / GMI1000) (Ralstonia solanacearum), this protein is Inner membrane-spanning protein YciB.